Here is a 390-residue protein sequence, read N- to C-terminus: Two-component response regulator ORR29 (390 aa).

Residues 13–130 (SAMVIDEDKC…TIKNLWQYVD (118 aa)) form the Response regulatory domain. Asp65 bears the 4-aspartylphosphate mark. Residues 169–226 (KKYYLMWTPHLQKKFLHALQILGKDASPKNIKKIMGVDNIDCRQIAAHLQKHRLRLTK) constitute a DNA-binding region (myb-like GARP). Disordered regions lie at residues 233 to 271 (FTTDTSKDESNSRIGPAESHHVCRNASTLQPRSNTQPTE) and 303 to 339 (SKHSSDPSGDEDEQVVVGGDQDGCANEANDIDSSGDH). Polar residues predominate over residues 257–271 (NASTLQPRSNTQPTE).

The protein belongs to the ARR family. Type-B subfamily. In terms of processing, two-component system major event consists of a His-to-Asp phosphorelay between a sensor histidine kinase (HK) and a response regulator (RR). In plants, the His-to-Asp phosphorelay involves an additional intermediate named Histidine-containing phosphotransfer protein (HPt). This multistep phosphorelay consists of a His-Asp-His-Asp sequential transfer of a phosphate group between first a His and an Asp of the HK protein, followed by the transfer to a conserved His of the HPt protein and finally the transfer to an Asp in the receiver domain of the RR protein.

The protein localises to the nucleus. In terms of biological role, transcriptional activator that binds specific DNA sequence. Functions as a response regulator involved in His-to-Asp phosphorelay signal transduction system. Phosphorylation of the Asp residue in the receiver domain activates the ability of the protein to promote the transcription of target genes. May directly activate some type-A response regulators in response to cytokinins. The chain is Two-component response regulator ORR29 from Oryza sativa subsp. indica (Rice).